The sequence spans 248 residues: Transcription factor MYBC1 (248 aa).

Residues 102–161 (TLKRPRLVWTPQLHKRFVDAVGHLGIKNAVPKTIMQLMSVEGLTRENVASHLQKYRLYLR) constitute a DNA-binding region (myb-like GARP).

In terms of tissue distribution, expressed in roots, leaves, stems, petioles, filaments, stigma, pedicels, sepals, anthers, petals, and siliques.

The protein resides in the nucleus. Its function is as follows. Probable transcription factor that acts as a negative regulator of freezing tolerance via a CBF-independent pathway. This chain is Transcription factor MYBC1, found in Arabidopsis thaliana (Mouse-ear cress).